The chain runs to 127 residues: Aspartate 1-decarboxylase (127 aa).

Ser-25 functions as the Schiff-base intermediate with substrate; via pyruvic acid in the catalytic mechanism. Position 25 is a pyruvic acid (Ser) (Ser-25). Substrate is bound at residue Thr-57. Tyr-58 serves as the catalytic Proton donor. Substrate is bound at residue 73–75; sequence GAA.

The protein belongs to the PanD family. In terms of assembly, heterooctamer of four alpha and four beta subunits. Requires pyruvate as cofactor. In terms of processing, is synthesized initially as an inactive proenzyme, which is activated by self-cleavage at a specific serine bond to produce a beta-subunit with a hydroxyl group at its C-terminus and an alpha-subunit with a pyruvoyl group at its N-terminus.

The protein localises to the cytoplasm. It carries out the reaction L-aspartate + H(+) = beta-alanine + CO2. It functions in the pathway cofactor biosynthesis; (R)-pantothenate biosynthesis; beta-alanine from L-aspartate: step 1/1. Its function is as follows. Catalyzes the pyruvoyl-dependent decarboxylation of aspartate to produce beta-alanine. In Staphylococcus aureus (strain MSSA476), this protein is Aspartate 1-decarboxylase.